Consider the following 419-residue polypeptide: O-methyltransferase gsfB (419 aa).

S-adenosyl-L-methionine is bound by residues 255–256, Asp278, 300–301, and Arg316; these read GG and DF. Catalysis depends on His320, which acts as the Proton acceptor.

This sequence belongs to the class I-like SAM-binding methyltransferase superfamily. Cation-independent O-methyltransferase family.

It catalyses the reaction 2-(2,4-dihydroxy-6-oxidobenzoyl)-5-hydroxy-3-methylbenzenolate + S-adenosyl-L-methionine = griseophenone D + S-adenosyl-L-homocysteine + H(+). Its pathway is secondary metabolite biosynthesis; terpenoid biosynthesis. O-methyltransferase; part of the gene cluster that mediates the biosynthesis of griseofulvin, an important antifungal drug that has been in use for a long time for treating dermatophyte infections. The first step of the pathway is the formation of the heptaketide backbone by gsfA which is initiated by priming with acetyl-CoA, followed by sequential condensations of 6 malonyl-CoA units. The resulting benzophenone can undergo a spontaneous dehydration to form norlichexanthone. However, the true precursor for the griseofulvin biosynthesis is not norlichexanthone, but the heptaketide benzophenone that is O-methylated at 3-OH by gsfB to produce griseophenone D which is further methylated at 9-OH by gsfC to yield griseophenone C. Griseophenone C is then substrate of halogenase gsfI which is responsible for the regio-specific chlorination at the C13 position to form griseophenone B. The cytochrome P450 gsfF catalyzes the coupling of orcinol and phloroglucinol rings in griseophenone B to form desmethyl-dehydrogriseofulvin A which is further methylated at 5-OH by gsfD to yield dehydrogriseofulvin. Finally, gsfE performs stereospecific reduction of enone 18 of dehydrogriseofulvin to afford the final product griseofulvin. In Penicillium aethiopicum, this protein is O-methyltransferase gsfB.